Reading from the N-terminus, the 907-residue chain is Putative pentatricopeptide repeat-containing protein At5g59900 (907 aa).

PPR repeat units lie at residues serine 103–proline 137, serine 155–lysine 185, glutamate 191–proline 225, aspartate 226–valine 260, asparagine 261–proline 295, aspartate 296–proline 330, serine 331–proline 365, asparagine 366–proline 400, asparagine 401–leucine 435, serine 436–proline 470, threonine 471–proline 505, serine 506–proline 540, asparagine 541–proline 575, aspartate 576–leucine 610, asparagine 611–leucine 645, aspartate 646–proline 680, aspartate 681–proline 715, asparagine 716–proline 750, asparagine 751–glycine 782, asparagine 786–proline 820, aspartate 821–proline 855, and aspartate 856–proline 890. Residues glycine 887–serine 907 form a disordered region. The span at asparagine 891–serine 907 shows a compositional bias: low complexity.

It belongs to the PPR family. P subfamily.

This is Putative pentatricopeptide repeat-containing protein At5g59900 from Arabidopsis thaliana (Mouse-ear cress).